Reading from the N-terminus, the 97-residue chain is MICOS complex subunit MIC12 (97 aa).

The helical transmembrane segment at 7–24 (LTSITAVSSTLAASYYFY) threads the bilayer.

Belongs to the MICOS complex subunit Mic12 family. In terms of assembly, component of the mitochondrial contact site and cristae organizing system (MICOS) complex.

Its subcellular location is the mitochondrion inner membrane. Component of the MICOS complex, a large protein complex of the mitochondrial inner membrane that plays crucial roles in the maintenance of crista junctions, inner membrane architecture, and formation of contact sites to the outer membrane. The sequence is that of MICOS complex subunit MIC12 (AIM5) from Zygosaccharomyces rouxii (strain ATCC 2623 / CBS 732 / NBRC 1130 / NCYC 568 / NRRL Y-229).